The following is a 136-amino-acid chain: Small ribosomal subunit protein uS9 (136 aa).

This sequence belongs to the universal ribosomal protein uS9 family.

The polypeptide is Small ribosomal subunit protein uS9 (Borrelia hermsii (strain HS1 / DAH)).